We begin with the raw amino-acid sequence, 78 residues long: MHEQLSPRDQALEARLVELETRLSFQEQALNELSEALADARLTGARNAELIRHLLDDLGKVRSTLFADAADEPPPPHY.

It belongs to the SlyX family.

This Xanthomonas oryzae pv. oryzae (strain MAFF 311018) protein is Protein SlyX homolog.